The primary structure comprises 214 residues: Small ribosomal subunit protein uS3c (214 aa).

The KH type-2 domain occupies 39–111 (IRTYLNKLAK…QITINVVEVE (73 aa)).

It belongs to the universal ribosomal protein uS3 family. In terms of assembly, part of the 30S ribosomal subunit.

The protein localises to the plastid. The protein resides in the chloroplast. This Thalassiosira pseudonana (Marine diatom) protein is Small ribosomal subunit protein uS3c (rps3).